Consider the following 418-residue polypeptide: Staphyloferrin B transporter (418 aa).

10 helical membrane passes run 19-39 (FIAIAGLTVLVPLLPIYMASL), 49-69 (LWSGIAIAAPAVTTMIASPIW), 88-108 (GLAVCLFLMALCTTPLQFVLV), 163-183 (ILGFSALLMSIAVITFIVCIF), 222-242 (FIIVGVLANFAMYGMLTALSP), 257-277 (VIGFLQSAFWTASILSAPLWG), 287-307 (SVYIFATIACGCSAILQGLAT), 317-337 (ILQGLTYSALIQSVMFVVVNA), 353-373 (MLVVGQIIGSLSGAAITSYTT), and 377-397 (TFIVMGVVFAVSSLFLICSTI).

This sequence belongs to the major facilitator superfamily.

The protein resides in the cell membrane. Involved in staphyloferrin B secretion. The polypeptide is Staphyloferrin B transporter (Staphylococcus aureus (strain NCTC 8325 / PS 47)).